Consider the following 545-residue polypeptide: CTP synthase (545 aa).

Residues 1–266 (MTTNYIFVTG…DDYICKRFSL (266 aa)) form an amidoligase domain region. Residue S14 participates in CTP binding. Residue S14 coordinates UTP. Residues 15 to 20 (SLGKGI) and D72 contribute to the ATP site. 2 residues coordinate Mg(2+): D72 and E140. Residues 147–149 (DIE), 187–192 (KTKPTQ), and K223 contribute to the CTP site. UTP is bound by residues 187–192 (KTKPTQ) and K223. 239 to 241 (KDV) serves as a coordination point for ATP. One can recognise a Glutamine amidotransferase type-1 domain in the interval 291–542 (TIGMIGKYVE…VKAAGDYQKR (252 aa)). An L-glutamine-binding site is contributed by G352. C379 functions as the Nucleophile; for glutamine hydrolysis in the catalytic mechanism. Residues 380–383 (LGMQ), E403, and R470 each bind L-glutamine. Residues H515 and E517 contribute to the active site.

This sequence belongs to the CTP synthase family. Homotetramer.

The catalysed reaction is UTP + L-glutamine + ATP + H2O = CTP + L-glutamate + ADP + phosphate + 2 H(+). It carries out the reaction L-glutamine + H2O = L-glutamate + NH4(+). It catalyses the reaction UTP + NH4(+) + ATP = CTP + ADP + phosphate + 2 H(+). Its pathway is pyrimidine metabolism; CTP biosynthesis via de novo pathway; CTP from UDP: step 2/2. Allosterically activated by GTP, when glutamine is the substrate; GTP has no effect on the reaction when ammonia is the substrate. The allosteric effector GTP functions by stabilizing the protein conformation that binds the tetrahedral intermediate(s) formed during glutamine hydrolysis. Inhibited by the product CTP, via allosteric rather than competitive inhibition. Functionally, catalyzes the ATP-dependent amination of UTP to CTP with either L-glutamine or ammonia as the source of nitrogen. Regulates intracellular CTP levels through interactions with the four ribonucleotide triphosphates. The protein is CTP synthase of Yersinia pseudotuberculosis serotype O:1b (strain IP 31758).